The chain runs to 270 residues: Type II restriction enzyme CeqI (270 aa).

The enzyme catalyses Endonucleolytic cleavage of DNA to give specific double-stranded fragments with terminal 5'-phosphates.. Its function is as follows. A P subtype restriction enzyme that recognizes the double-stranded sequence 5'-GATATC-3' and cleaves after T-3. This chain is Type II restriction enzyme CeqI (ceqIR), found in Rhodococcus hoagii (Corynebacterium equii).